The sequence spans 453 residues: Homogentisate 1,2-dioxygenase (453 aa).

His306 (proton acceptor) is an active-site residue. Fe cation is bound by residues His349 and Glu355. The homogentisate site is built by Tyr364 and His385. His385 provides a ligand contact to Fe cation.

Belongs to the homogentisate dioxygenase family. Hexamer; dimer of trimers. The cofactor is Fe cation.

The catalysed reaction is homogentisate + O2 = 4-maleylacetoacetate + H(+). It functions in the pathway amino-acid degradation; L-phenylalanine degradation; acetoacetate and fumarate from L-phenylalanine: step 4/6. In terms of biological role, involved in the catabolism of homogentisate (2,5-dihydroxyphenylacetate or 2,5-OH-PhAc), a central intermediate in the degradation of phenylalanine and tyrosine. Catalyzes the oxidative ring cleavage of the aromatic ring of homogentisate to yield maleylacetoacetate. This is Homogentisate 1,2-dioxygenase from Rhizobium rhizogenes (strain K84 / ATCC BAA-868) (Agrobacterium radiobacter).